Consider the following 107-residue polypeptide: Nucleoid-associated protein BT_0257 (107 aa).

It belongs to the YbaB/EbfC family. As to quaternary structure, homodimer.

It localises to the cytoplasm. The protein resides in the nucleoid. Binds to DNA and alters its conformation. May be involved in regulation of gene expression, nucleoid organization and DNA protection. In Bartonella tribocorum (strain CIP 105476 / IBS 506), this protein is Nucleoid-associated protein BT_0257.